Consider the following 597-residue polypeptide: Glypican-3 (597 aa).

Positions 1–24 are cleaved as a signal peptide; that stretch reads MAGTVRTACLLVAMLLGLGCLGQA. Gln25 bears the Pyrrolidone carboxylic acid mark. 7 cysteine pairs are disulfide-bonded: Cys34–Cys71, Cys64–Cys261, Cys72–Cys264, Cys196–Cys348, Cys251–Cys284, Cys273–Cys421, and Cys277–Cys409. 2 N-linked (GlcNAc...) asparagine glycosylation sites follow: Asn123 and Asn240. Position 351 is a phosphoserine (Ser351). A glycan (N-linked (GlcNAc...) asparagine) is linked at Asn417. 2 O-linked (Xyl...) (glycosaminoglycan) serine glycosylation sites follow: Ser494 and Ser508. Residues 533–553 form a disordered region; sequence DAPGNKQHGNQKDNEITTSHS.

This sequence belongs to the glypican family. As to quaternary structure, heterodimer; disulfide-linked. Cleavage by a furin-like convertase results in production of alpha and beta chains which form a disulfide-linked heterodimer. Interacts with DPP4. Interacts with FGF2. Interacts with WNT5A. Also interacts with WNT3A and WNT7B. Interacts with hedgehog protein SHH; the heparan sulfate chains are not required for the interaction. Also interacts with hedgehog protein IHH. Interacts with CD81. Interacts with Wnt receptors FZD4, FZD7 and FZD8; the heparan sulfate chains are required for the interaction. O-glycosylated; contains heparan sulfate and/or chondroitin sulfate. In terms of processing, cleaved intracellularly by a furin-like convertase to generate 2 subunits, alpha and beta, which remain associated through disulfide bonds and are associated with the cell surface via the GPI-anchor. This processing is essential for its role in inhibition of hedgehog signaling. A second proteolytic event may result in cleavage of the protein on the cell surface, separating it from the GPI-anchor and leading to its shedding from the cell surface.

Its subcellular location is the cell membrane. Its function is as follows. Cell surface proteoglycan. Negatively regulates the hedgehog signaling pathway when attached via the GPI-anchor to the cell surface by competing with the hedgehog receptor PTC1 for binding to hedgehog proteins. Binding to the hedgehog protein SHH triggers internalization of the complex by endocytosis and its subsequent lysosomal degradation. Positively regulates the canonical Wnt signaling pathway by binding to the Wnt receptor Frizzled and stimulating the binding of the Frizzled receptor to Wnt ligands. Positively regulates the non-canonical Wnt signaling pathway. Binds to CD81 which decreases the availability of free CD81 for binding to the transcriptional repressor HHEX, resulting in nuclear translocation of HHEX and transcriptional repression. Inhibits the dipeptidyl peptidase activity of DPP4. Plays a role in limb patterning and skeletal development by controlling the cellular response to BMP4. Modulates the effects of growth factors BMP2, BMP7 and FGF7 on renal branching morphogenesis. Required for coronary vascular development. Plays a role in regulating cell movements during gastrulation. This is Glypican-3 (Gpc3) from Rattus norvegicus (Rat).